A 565-amino-acid chain; its full sequence is Cytokinin dehydrogenase 2 (565 aa).

The signal sequence occupies residues 1-20 (MKQEQVRMAVLLMLNCFVKA). A glycan (N-linked (GlcNAc...) asparagine) is linked at Asn64. The FAD-binding PCMH-type domain occupies 74–255 (RLAAAAAVLY…TRARIPLAPA (182 aa)). Positions 108, 110, and 112 each coordinate FAD. Pros-8alpha-FAD histidine is present on His113. FAD contacts are provided by Ser114, Gln118, Asp179, Thr184, Ser190, Ile194, and Ile245. N-linked (GlcNAc...) asparagine glycosylation occurs at Asn464. Positions 517, 554, and 557 each coordinate FAD.

This sequence belongs to the oxygen-dependent FAD-linked oxidoreductase family. Monomer. Requires FAD as cofactor. Post-translationally, glycosylated. Mostly expressed in leaves, culms, inflorescence meristems, and flowers, especially in vascular tissues.

It localises to the secreted. It is found in the extracellular space. It carries out the reaction N(6)-dimethylallyladenine + A + H2O = 3-methyl-2-butenal + adenine + AH2. Functionally, catalyzes the oxidation of cytokinins, a family of N(6)-substituted adenine derivatives that are plant hormones, where the substituent is an isopentenyl group. Is a major QTL involved in grain yield. Modulates the number of reproductive organs by regulating the cytokinin accumulation in inflorescence meristems. Acts as negative regulator of panicle branching. The polypeptide is Cytokinin dehydrogenase 2 (Oryza sativa subsp. japonica (Rice)).